The following is a 467-amino-acid chain: MSLSLWQQCLARLQDELPATEFSMWIRPLQAELSDNTLALYAPNRFVLDWVRDKYLNNINGLLTSFCGADAPQLRFEVGTKPVTQTPQAAVTSNVAAPAQVAQTQPQRAAPSTRSGWDNVPAPAEPTYRSNVNVKHTFDNFVEGKSNQLARAAARQVADNPGGAYNPLFLYGGTGLGKTHLLHAVGNGIMARKPNAKVVYMHSERFVQDMVKALQNNAIEEFKRYYRSVDALLIDDIQFFANKERSQEEFFHTFNALLEGNQQIILTSDRYPKEINGVEDRLKSRFGWGLTVAIEPPELETRVAILMKKADENDIRLPGEVAFFIAKRLRSNVRELEGALNRVIANANFTGRAITIDFVREALRDLLALQEKLVTIDNIQKTVAEYYKIKVADLLSKRRSRSVARPRQMAMALAKELTIHSLPEIGDAFGGRDHTTVLHACRKIEQLREESHDIKEDFSNLIRTLSS.

A domain I, interacts with DnaA modulators region spans residues 1–90 (MSLSLWQQCL…KPVTQTPQAA (90 aa)). The segment at 91–130 (VTSNVAAPAQVAQTQPQRAAPSTRSGWDNVPAPAEPTYRS) is domain II. Residues 98-111 (PAQVAQTQPQRAAP) are compositionally biased toward low complexity. The tract at residues 98 to 119 (PAQVAQTQPQRAAPSTRSGWDN) is disordered. A domain III, AAA+ region region spans residues 131–347 (NVNVKHTFDN…GALNRVIANA (217 aa)). Positions 175, 177, 178, and 179 each coordinate ATP. Residues 348–467 (NFTGRAITID…FSNLIRTLSS (120 aa)) are domain IV, binds dsDNA.

The protein belongs to the DnaA family. In terms of assembly, oligomerizes as a right-handed, spiral filament on DNA at oriC.

The protein localises to the cytoplasm. Functionally, plays an essential role in the initiation and regulation of chromosomal replication. ATP-DnaA binds to the origin of replication (oriC) to initiate formation of the DNA replication initiation complex once per cell cycle. Binds the DnaA box (a 9 base pair repeat at the origin) and separates the double-stranded (ds)DNA. Forms a right-handed helical filament on oriC DNA; dsDNA binds to the exterior of the filament while single-stranded (ss)DNA is stabiized in the filament's interior. The ATP-DnaA-oriC complex binds and stabilizes one strand of the AT-rich DNA unwinding element (DUE), permitting loading of DNA polymerase. After initiation quickly degrades to an ADP-DnaA complex that is not apt for DNA replication. Binds acidic phospholipids. The sequence is that of Chromosomal replication initiator protein DnaA from Shigella boydii serotype 4 (strain Sb227).